We begin with the raw amino-acid sequence, 274 residues long: Nitrogenase iron protein (274 aa).

Residue 8–15 (GKGGIGKS) participates in ATP binding. Residue cysteine 94 coordinates [4Fe-4S] cluster. Arginine 97 bears the ADP-ribosylarginine; by dinitrogenase reductase ADP-ribosyltransferase mark. Residue cysteine 131 participates in [4Fe-4S] cluster binding.

Belongs to the NifH/BchL/ChlL family. Homodimer. The cofactor is [4Fe-4S] cluster. The reversible ADP-ribosylation of Arg-97 inactivates the nitrogenase reductase and regulates nitrogenase activity.

The enzyme catalyses N2 + 8 reduced [2Fe-2S]-[ferredoxin] + 16 ATP + 16 H2O = H2 + 8 oxidized [2Fe-2S]-[ferredoxin] + 2 NH4(+) + 16 ADP + 16 phosphate + 6 H(+). Its function is as follows. The key enzymatic reactions in nitrogen fixation are catalyzed by the nitrogenase complex, which has 2 components: the iron protein and the molybdenum-iron protein. This Chlorobium luteolum (strain DSM 273 / BCRC 81028 / 2530) (Pelodictyon luteolum) protein is Nitrogenase iron protein.